A 113-amino-acid chain; its full sequence is Teretoxin Tan14.1 (113 aa).

The signal sequence occupies residues 1-21 (MALEAQMTLRMFVLVAMASTV). A propeptide spanning residues 22–86 (HVLSSSFSED…DETSSRTGKR (65 aa)) is cleaved from the precursor.

Belongs to the teretoxin N (TN) superfamily. Contains 2 disulfide bonds. Expressed by the venom duct.

Its subcellular location is the secreted. In Terebra anilis (Auger snail), this protein is Teretoxin Tan14.1.